The following is a 513-amino-acid chain: MTRVINLDGESLTLEDVIAIARQGVACRIDDSAIEAVNASRKIVDDIVSEKRVVYGVTTGFGSLCNVSISPEDTVQLQENLIRTHASGFGDPLPEDAVRAIMLIRINSLVKGYSGIRLSTIEKLLELLNKGVHPYIPEKGSLGASGDLAPLAHMVLPMLGLGKAYYKGELLSGQEALDKAGIDKISLAAKEGLALINGTTVLTAIGALATYDAIQLLKLSDLAGALSLEVHNGITSPFEENLHTIRPQSGQLATARNIRNLLEGSQNTTVATQSRVQDPYTLRCMPQIHGASKDSIAYVKSKVDIEINSVTDNPIICKDGHVISGGNFHGEPMAQSFDFLGIAISEIGNVSERRVERLVNSQLSKLPSFLVKYPGLNSGFMITQYACASLASENKVLAHPASVDSIPSCENQEDFVSMGTTAARKAFEILKNSRRIVATEIMAACQALDLKPENHELGKGTKVAYDLFRKEVNFIEHDKHIEIYDELNKASAVIEDPSFLEAVEQAVELSIQF.

Positions 144–146 (ASG) form a cross-link, 5-imidazolinone (Ala-Gly). At Ser145 the chain carries 2,3-didehydroalanine (Ser).

It belongs to the PAL/histidase family. Post-translationally, contains an active site 4-methylidene-imidazol-5-one (MIO), which is formed autocatalytically by cyclization and dehydration of residues Ala-Ser-Gly.

The protein localises to the cytoplasm. It carries out the reaction L-histidine = trans-urocanate + NH4(+). It functions in the pathway amino-acid degradation; L-histidine degradation into L-glutamate; N-formimidoyl-L-glutamate from L-histidine: step 1/3. This is Histidine ammonia-lyase from Streptococcus pyogenes serotype M18 (strain MGAS8232).